A 492-amino-acid polypeptide reads, in one-letter code: MQSNTDSSTSGTYSQTVGLLYVFNLIVGTGALALPKAFQTAGWLLSITLLTFSAFMSYVAATFVIEALSVANAVLSKKRRVEYDDVVVADGPSTFEISKKVEVSEMASMFLSKVSLVFSYFAIIIYLFGDLAIYSTTVPKSAMNIVCATINASTVKSSDPCHESWPEILTRMTVYRFFVIIFVVVVCLPMVIAGITKTRHIQIMTTLSRWAAFILMISLATMQLSSDGAAAHPPAYNFHGFGSLFGCAVYAFMCHHSIPSLITPMRTKDNVFGKIALVYGVVGVFYFTLSLTGAFAFEHVQDIYTLNFFHDGNTSFIYSIIDYFLALFPIITLTSSYPIIALTLINNFNVVKDILCPKVGQENESLLEADSLVEDNDTDDEREARNARNEKSVFDVLVPALVLALPTFLSLLTDDMLLLASITGSFPGVAVQFAIPCLLVTAARKHARSVLNFPVPRKNNSPFQSPIWIVLISSWAGFSMIMVLLNLVGVKF.

At 1–17 (MQSNTDSSTSGTYSQTV) the chain is on the cytoplasmic side. A helical membrane pass occupies residues 18–38 (GLLYVFNLIVGTGALALPKAF). The Extracellular portion of the chain corresponds to 39–44 (QTAGWL). Residues 45–65 (LSITLLTFSAFMSYVAATFVI) form a helical membrane-spanning segment. Residues 66-113 (EALSVANAVLSKKRRVEYDDVVVADGPSTFEISKKVEVSEMASMFLSK) are Cytoplasmic-facing. Residues 114-134 (VSLVFSYFAIIIYLFGDLAIY) traverse the membrane as a helical segment. Topologically, residues 135 to 176 (STTVPKSAMNIVCATINASTVKSSDPCHESWPEILTRMTVYR) are extracellular. N-linked (GlcNAc...) asparagine glycosylation occurs at N151. The helical transmembrane segment at 177–197 (FFVIIFVVVVCLPMVIAGITK) threads the bilayer. At 198–209 (TRHIQIMTTLSR) the chain is on the cytoplasmic side. The helical transmembrane segment at 210 to 230 (WAAFILMISLATMQLSSDGAA) threads the bilayer. At 231 to 237 (AHPPAYN) the chain is on the extracellular side. Residues 238–258 (FHGFGSLFGCAVYAFMCHHSI) form a helical membrane-spanning segment. The Cytoplasmic segment spans residues 259–274 (PSLITPMRTKDNVFGK). A helical membrane pass occupies residues 275 to 295 (IALVYGVVGVFYFTLSLTGAF). Residues 296–324 (AFEHVQDIYTLNFFHDGNTSFIYSIIDYF) are Extracellular-facing. N-linked (GlcNAc...) asparagine glycosylation is present at N313. Residues 325-345 (LALFPIITLTSSYPIIALTLI) traverse the membrane as a helical segment. Topologically, residues 346 to 392 (NNFNVVKDILCPKVGQENESLLEADSLVEDNDTDDEREARNARNEKS) are cytoplasmic. Residues 393 to 413 (VFDVLVPALVLALPTFLSLLT) form a helical membrane-spanning segment. The Extracellular segment spans residues 414–415 (DD). Residues 416–436 (MLLLASITGSFPGVAVQFAIP) form a helical membrane-spanning segment. The Cytoplasmic segment spans residues 437–466 (CLLVTAARKHARSVLNFPVPRKNNSPFQSP). The chain crosses the membrane as a helical span at residues 467–487 (IWIVLISSWAGFSMIMVLLNL). Over 488-492 (VGVKF) the chain is Extracellular.

The protein belongs to the TMEM104 family.

The protein localises to the membrane. The sequence is that of Transmembrane protein 104 homolog from Caenorhabditis elegans.